Reading from the N-terminus, the 483-residue chain is tRNA sulfurtransferase (483 aa).

Residues 61–165 (EAVCDALTRI…DDKLILVNAR (105 aa)) form the THUMP domain. Residues 183–184 (LI), lysine 265, glycine 287, and glutamine 296 contribute to the ATP site. A disulfide bridge connects residues cysteine 344 and cysteine 456. The 80-residue stretch at 404 to 483 (FATNDVVLDI…FNNVKVYRKK (80 aa)) folds into the Rhodanese domain. Residue cysteine 456 is the Cysteine persulfide intermediate of the active site.

The protein belongs to the ThiI family.

Its subcellular location is the cytoplasm. It catalyses the reaction [ThiI sulfur-carrier protein]-S-sulfanyl-L-cysteine + a uridine in tRNA + 2 reduced [2Fe-2S]-[ferredoxin] + ATP + H(+) = [ThiI sulfur-carrier protein]-L-cysteine + a 4-thiouridine in tRNA + 2 oxidized [2Fe-2S]-[ferredoxin] + AMP + diphosphate. The catalysed reaction is [ThiS sulfur-carrier protein]-C-terminal Gly-Gly-AMP + S-sulfanyl-L-cysteinyl-[cysteine desulfurase] + AH2 = [ThiS sulfur-carrier protein]-C-terminal-Gly-aminoethanethioate + L-cysteinyl-[cysteine desulfurase] + A + AMP + 2 H(+). It participates in cofactor biosynthesis; thiamine diphosphate biosynthesis. Its function is as follows. Catalyzes the ATP-dependent transfer of a sulfur to tRNA to produce 4-thiouridine in position 8 of tRNAs, which functions as a near-UV photosensor. Also catalyzes the transfer of sulfur to the sulfur carrier protein ThiS, forming ThiS-thiocarboxylate. This is a step in the synthesis of thiazole, in the thiamine biosynthesis pathway. The sulfur is donated as persulfide by IscS. This Proteus mirabilis (strain HI4320) protein is tRNA sulfurtransferase.